The following is a 96-amino-acid chain: Putative pterin-4-alpha-carbinolamine dehydratase (96 aa).

This sequence belongs to the pterin-4-alpha-carbinolamine dehydratase family.

It catalyses the reaction (4aS,6R)-4a-hydroxy-L-erythro-5,6,7,8-tetrahydrobiopterin = (6R)-L-erythro-6,7-dihydrobiopterin + H2O. This chain is Putative pterin-4-alpha-carbinolamine dehydratase, found in Prochlorococcus marinus (strain SARG / CCMP1375 / SS120).